The sequence spans 555 residues: Lysine--tRNA ligase (555 aa).

The 'HIGH' region motif lies at 37–45 (TSGRLHVGN). Positions 301–305 (AMSSS) match the 'KMSKS' region motif.

This sequence belongs to the class-I aminoacyl-tRNA synthetase family.

It is found in the cytoplasm. The enzyme catalyses tRNA(Lys) + L-lysine + ATP = L-lysyl-tRNA(Lys) + AMP + diphosphate. The polypeptide is Lysine--tRNA ligase (Methanopyrus kandleri (strain AV19 / DSM 6324 / JCM 9639 / NBRC 100938)).